Reading from the N-terminus, the 95-residue chain is Small integral membrane protein 26 (95 aa).

Residues 13–35 (MSVVYGIGTWSVLGSLLYYSRTM) traverse the membrane as a helical segment.

The protein belongs to the SMIM26 family. As to quaternary structure, interacts with AGK and SLC25A11. In terms of tissue distribution, detected in kidney (at protein level).

It localises to the mitochondrion outer membrane. In terms of biological role, may play a role in cell viability. This chain is Small integral membrane protein 26, found in Homo sapiens (Human).